Here is a 149-residue protein sequence, read N- to C-terminus: Decarboxylase AgnL1 (149 aa).

Residues 30–125 (PGMSEEDYRH…VGDHEKFADT (96 aa)) enclose the EthD domain.

Belongs to the tpcK family.

It catalyses the reaction atrochrysone carboxylate + H(+) = atrochrysone + CO2. It participates in secondary metabolite biosynthesis. In terms of biological role, decarboxylase; part of the gene cluster that mediates the biosynthesis of agnestins, dihydroxy-xanthone metabolites. The pathway begins with the assembly and cyclization of atrochrysone thioester by the non-reducing polyketide synthase Agnpks1. The atrochrysone carboxyl ACP thioesterase AgnL7 then breaks the thioester bond and releases the atrochrysone carboxylic acid as the first enzyme-free intermediate. The decarboxylase AgnL1 then catalyzes the concerted decarboxylation-elimination required to convert atochrysone carboxylic acid into emodin anthrone, which is further oxidized to emodin by the anthrone oxygenase AgnL2. Emodin then undergoes reduction catalyzed by the oxidoreductase AgnL4 to yield the dihydroquinone tautomer which is the substrate for reduction by the short chain dehydrogenase AgnL6 reduction to produce hydroxyketone, followed by AgnL8 dehydration and likely spontaneous autoxidation to chrysophanol. Baeyer-Villiger oxidation by the oxidase AgnL3 leads to monodictyphenone via cleavage of the C-10/C-10a bond of chrysophanol. Alternative cleavage at the C-4a/C-10 bond of chrysophanol also leads to the formation some cephalone F. Further conversion to agnestins A and B, requires reduction to dihydro-monodictyphenone, oxidation to agnestin C probably via an epoxide, and rearrangement to either agnestin A or agnestin B directly, although agnestin A or agnestin B can also interconvert. Within the cluster, AgnR1 is the only unassigned oxidoreductase present which could be involved in this conversion. However, AgnR1 seems not to be involved in this step, and thus genes involved in the proposed oxidation/reduction may be located elsewhere on the genome. Further agnestin A derivatives are probably formed by spontaneous decarboxylations, dehydrations and methanolysis reactions. This chain is Decarboxylase AgnL1, found in Paecilomyces divaricatus (Penicillium divaricatum).